The sequence spans 126 residues: Putative 15 kDa capsid protein (126 aa).

It localises to the virion. The polypeptide is Putative 15 kDa capsid protein (P15) (Bombyx mori nuclear polyhedrosis virus (BmNPV)).